Reading from the N-terminus, the 241-residue chain is Ribonuclease PH (241 aa).

Residues arginine 89 and 127 to 129 contribute to the phosphate site; that span reads GTR.

This sequence belongs to the RNase PH family. As to quaternary structure, homohexameric ring arranged as a trimer of dimers.

It carries out the reaction tRNA(n+1) + phosphate = tRNA(n) + a ribonucleoside 5'-diphosphate. Its function is as follows. Phosphorolytic 3'-5' exoribonuclease that plays an important role in tRNA 3'-end maturation. Removes nucleotide residues following the 3'-CCA terminus of tRNAs; can also add nucleotides to the ends of RNA molecules by using nucleoside diphosphates as substrates, but this may not be physiologically important. Probably plays a role in initiation of 16S rRNA degradation (leading to ribosome degradation) during starvation. This chain is Ribonuclease PH, found in Xanthomonas oryzae pv. oryzae (strain MAFF 311018).